Here is a 523-residue protein sequence, read N- to C-terminus: Nuclear receptor ROR-alpha (523 aa).

Low complexity predominate over residues M1 to S26. Residues M1–T63 are disordered. K38 carries the post-translational modification N6-methyllysine. Polar residues predominate over residues Q48 to I57. 2 consecutive NR C4-type zinc fingers follow at residues C73–C93 and C109–C133. The segment at residues C73–M138 is a DNA-binding region (nuclear receptor). The segment at D154–T183 is disordered. T183 carries the post-translational modification Phosphothreonine; by MAPK1. K240 is covalently cross-linked (Glycyl lysine isopeptide (Lys-Gly) (interchain with G-Cter in SUMO)). The NR LBD domain maps to E272–L510. An AF-2 motif is present at residues L506–G523.

This sequence belongs to the nuclear hormone receptor family. NR1 subfamily. As to quaternary structure, monomer. Interacts (via the DNA-binding domain) with HIF1A; the interaction enhances HIF1A transcription under hypoxia through increasing protein stability. Interacts with CEBPB; the interaction disrupts the interaction CEBPB:EP300. Interacts with the coactivators NCOA2, PPARGC1A (via LXXLL motif), EP300 and MED1. Interacts with the corepressor NCOR1. Interacts with MAGED1 and CTNNB1. Interacts with CRY1 and PER2. Interacts (via AF-2 motif) with PROX1. Interacts with NRIP1. Isoform 4 interacts (via AF-2 motif) with isoform 1 of FOXP3 (via LXXLL motif). In terms of processing, phosphorylation by conventional PKCs in neurons inhibits transcriptional activity. Phosphorylated on Thr-183 by MAPK1/ERK1 in vitro. Post-translationally, sumoylated by SENP1 and SENP2. Sumoylation, promoted by PIAS2, PIAS3, PIAS4 but not PIAS1, enhances the transcriptional activity. Desumoylated by SENP1. Ubiquitinated, leading to its degradation by the proteasome. Proteasomal degradation is required for efficient transcriptional activity and is prevented by HR. In terms of processing, monomethylated at Lys-38 by EZH2, this creates a degron recognized by a DCX (DDB1-DCAF1/VPRBP-CUL4A-RBX1) E3 ubiquitin ligase complex. As to expression, widely expressed in a number of tissues. Expressed in both regulatory T-cells (Treg) and effector T-cells (Teff). Isoform 4: Highly expressed in the central nervous system, including in the cerebellum.

Its subcellular location is the nucleus. In terms of biological role, nuclear receptor that binds DNA as a monomer to ROR response elements (RORE) containing a single core motif half-site 5'-AGGTCA-3' preceded by a short A-T-rich sequence. Key regulator of embryonic development, cellular differentiation, immunity, circadian rhythm as well as lipid, steroid, xenobiotics and glucose metabolism. Considered to have intrinsic transcriptional activity, have some natural ligands like oxysterols that act as agonists (25-hydroxycholesterol) or inverse agonists (7-oxygenated sterols), enhancing or repressing the transcriptional activity, respectively. Recruits distinct combinations of cofactors to target genes regulatory regions to modulate their transcriptional expression, depending on the tissue, time and promoter contexts. Regulates genes involved in photoreceptor development including OPN1SW, OPN1SM and ARR3 and skeletal muscle development with MYOD1. Required for proper cerebellum development. Regulates SHH gene expression, among others, to induce granule cells proliferation as well as expression of genes involved in calcium-mediated signal transduction. Regulates the circadian expression of several clock genes, including CLOCK, BMAL1, NPAS2 and CRY1. Competes with NR1D1 for binding to their shared DNA response element on some clock genes such as BMAL1, CRY1 and NR1D1 itself, resulting in NR1D1-mediated repression or RORA-mediated activation of clock genes expression, leading to the circadian pattern of clock genes expression. Therefore influences the period length and stability of the clock. Regulates genes involved in lipid metabolism such as apolipoproteins APOA1, APOA5, APOC3 and PPARG. In liver, has specific and redundant functions with RORC as positive or negative modulator of expression of genes encoding phase I and phase II proteins involved in the metabolism of lipids, steroids and xenobiotics, such as CYP7B1 and SULT2A1. Induces a rhythmic expression of some of these genes. In addition, interplays functionally with NR1H2 and NR1H3 for the regulation of genes involved in cholesterol metabolism. Also involved in the regulation of hepatic glucose metabolism through the modulation of G6PC1 and PCK1. In adipose tissue, plays a role as negative regulator of adipocyte differentiation, probably acting through dual mechanisms. May suppress CEBPB-dependent adipogenesis through direct interaction and PPARG-dependent adipogenesis through competition for DNA-binding. Downstream of IL6 and TGFB and synergistically with RORC isoform 2, is implicated in the lineage specification of uncommitted CD4(+) T-helper (T(H)) cells into T(H)17 cells, antagonizing the T(H)1 program. Probably regulates IL17 and IL17F expression on T(H) by binding to the essential enhancer conserved non-coding sequence 2 (CNS2) in the IL17-IL17F locus. Involved in hypoxia signaling by interacting with and activating the transcriptional activity of HIF1A. May inhibit cell growth in response to cellular stress. May exert an anti-inflammatory role by inducing CHUK expression and inhibiting NF-kappa-B signaling. The sequence is that of Nuclear receptor ROR-alpha (RORA) from Homo sapiens (Human).